We begin with the raw amino-acid sequence, 89 residues long: Small ribosomal subunit protein uS15 (89 aa).

The protein belongs to the universal ribosomal protein uS15 family. Part of the 30S ribosomal subunit. Forms a bridge to the 50S subunit in the 70S ribosome, contacting the 23S rRNA.

Its function is as follows. One of the primary rRNA binding proteins, it binds directly to 16S rRNA where it helps nucleate assembly of the platform of the 30S subunit by binding and bridging several RNA helices of the 16S rRNA. Forms an intersubunit bridge (bridge B4) with the 23S rRNA of the 50S subunit in the ribosome. This chain is Small ribosomal subunit protein uS15, found in Magnetococcus marinus (strain ATCC BAA-1437 / JCM 17883 / MC-1).